A 261-amino-acid chain; its full sequence is Cytochrome c oxidase subunit 3 (261 aa).

Topologically, residues 1–15 (MTHQTHAYHMVNPSP) are mitochondrial matrix. A helical transmembrane segment spans residues 16 to 34 (WPLTGALSALLMTSGLIMW). Residues 35 to 40 (FHFNST) lie on the Mitochondrial intermembrane side of the membrane. The chain crosses the membrane as a helical span at residues 41–66 (ALLTLGLTTNMLTMYQWWRDVIREST). The Mitochondrial matrix portion of the chain corresponds to 67–72 (FQGHHT). Residues 73–105 (PAVQKGLRYGMILFIISEVLFFTGFFWAFYHSS) form a helical membrane-spanning segment. Residues 106–128 (LAPTPELGGCWPPTGIHPLNPLE) are Mitochondrial intermembrane-facing. Residues 129–152 (VPLLNTSVLLASGVSITWAHHSLM) form a helical membrane-spanning segment. Topologically, residues 153-155 (EGN) are mitochondrial matrix. The chain crosses the membrane as a helical span at residues 156-183 (RYHMLQALFITIALGVYFTLLQASEYYE). Over 184 to 190 (APFTISD) the chain is Mitochondrial intermembrane. A helical membrane pass occupies residues 191 to 223 (GVYGSTFFVATGFHGLHVIIGSTFLIVCFFRQL). Residues 224–232 (KFHFTSSHH) lie on the Mitochondrial matrix side of the membrane. Residues 233-256 (FGFEAAAWYWHFVDVVWLFLYMSI) traverse the membrane as a helical segment. The Mitochondrial intermembrane portion of the chain corresponds to 257–261 (YWWGS).

The protein belongs to the cytochrome c oxidase subunit 3 family. In terms of assembly, component of the cytochrome c oxidase (complex IV, CIV), a multisubunit enzyme composed of 14 subunits. The complex is composed of a catalytic core of 3 subunits MT-CO1, MT-CO2 and MT-CO3, encoded in the mitochondrial DNA, and 11 supernumerary subunits COX4I, COX5A, COX5B, COX6A, COX6B, COX6C, COX7A, COX7B, COX7C, COX8 and NDUFA4, which are encoded in the nuclear genome. The complex exists as a monomer or a dimer and forms supercomplexes (SCs) in the inner mitochondrial membrane with NADH-ubiquinone oxidoreductase (complex I, CI) and ubiquinol-cytochrome c oxidoreductase (cytochrome b-c1 complex, complex III, CIII), resulting in different assemblies (supercomplex SCI(1)III(2)IV(1) and megacomplex MCI(2)III(2)IV(2)).

The protein resides in the mitochondrion inner membrane. It carries out the reaction 4 Fe(II)-[cytochrome c] + O2 + 8 H(+)(in) = 4 Fe(III)-[cytochrome c] + 2 H2O + 4 H(+)(out). Its function is as follows. Component of the cytochrome c oxidase, the last enzyme in the mitochondrial electron transport chain which drives oxidative phosphorylation. The respiratory chain contains 3 multisubunit complexes succinate dehydrogenase (complex II, CII), ubiquinol-cytochrome c oxidoreductase (cytochrome b-c1 complex, complex III, CIII) and cytochrome c oxidase (complex IV, CIV), that cooperate to transfer electrons derived from NADH and succinate to molecular oxygen, creating an electrochemical gradient over the inner membrane that drives transmembrane transport and the ATP synthase. Cytochrome c oxidase is the component of the respiratory chain that catalyzes the reduction of oxygen to water. Electrons originating from reduced cytochrome c in the intermembrane space (IMS) are transferred via the dinuclear copper A center (CU(A)) of subunit 2 and heme A of subunit 1 to the active site in subunit 1, a binuclear center (BNC) formed by heme A3 and copper B (CU(B)). The BNC reduces molecular oxygen to 2 water molecules using 4 electrons from cytochrome c in the IMS and 4 protons from the mitochondrial matrix. This is Cytochrome c oxidase subunit 3 (MT-CO3) from Ovis aries (Sheep).